The primary structure comprises 954 residues: Glucosidase 2 subunit alpha (954 aa).

Residues 1–22 form the signal peptide; it reads MVLLKWLVCQLVFFTAFSHAFT. Asn-114, Asn-126, Asn-142, Asn-173, and Asn-345 each carry an N-linked (GlcNAc...) asparagine glycan. Asp-537 acts as the Nucleophile in catalysis. Residue Glu-540 is part of the active site. The active-site Proton donor is Asp-614. Residues Asn-783, Asn-791, Asn-867, Asn-880, Asn-907, and Asn-941 are each glycosylated (N-linked (GlcNAc...) asparagine).

The protein belongs to the glycosyl hydrolase 31 family. As to quaternary structure, heterodimer of a catalytic subunit alpha (ROT2) and a subunit beta (GTB1).

It localises to the endoplasmic reticulum. It catalyses the reaction N(4)-(alpha-D-Glc-(1-&gt;3)-alpha-D-Man-(1-&gt;2)-alpha-D-Man-(1-&gt;2)-alpha-D-Man-(1-&gt;3)-[alpha-D-Man-(1-&gt;2)-alpha-D-Man-(1-&gt;3)-[alpha-D-Man-(1-&gt;2)-alpha-D-Man-(1-&gt;6)]-alpha-D-Man-(1-&gt;6)]-beta-D-Man-(1-&gt;4)-beta-D-GlcNAc-(1-&gt;4)-beta-D-GlcNAc)-L-asparaginyl-[protein] + H2O = N(4)-(alpha-D-Man-(1-&gt;2)-alpha-D-Man-(1-&gt;2)-alpha-D-Man-(1-&gt;3)-[alpha-D-Man-(1-&gt;2)-alpha-D-Man-(1-&gt;3)-[alpha-D-Man-(1-&gt;2)-alpha-D-Man-(1-&gt;6)]-alpha-D-Man-(1-&gt;6)]-beta-D-Man-(1-&gt;4)-beta-D-GlcNAc-(1-&gt;4)-beta-D-GlcNAc)-L-asparaginyl-[protein] (N-glucan mannose isomer 9A1,2,3B1,2,3) + beta-D-glucose. The enzyme catalyses N(4)-(alpha-D-Glc-(1-&gt;3)-alpha-D-Glc-(1-&gt;3)-alpha-D-Man-(1-&gt;2)-alpha-D-Man-(1-&gt;2)-alpha-D-Man-(1-&gt;3)-[alpha-D-Man-(1-&gt;2)-alpha-D-Man-(1-&gt;3)-[alpha-D-Man-(1-&gt;2)-alpha-D-Man-(1-&gt;6)]-alpha-D-Man-(1-&gt;6)]-beta-D-Man-(1-&gt;4)-beta-D-GlcNAc-(1-&gt;4)-beta-D-GlcNAc)-L-asparaginyl-[protein] + H2O = N(4)-(alpha-D-Glc-(1-&gt;3)-alpha-D-Man-(1-&gt;2)-alpha-D-Man-(1-&gt;2)-alpha-D-Man-(1-&gt;3)-[alpha-D-Man-(1-&gt;2)-alpha-D-Man-(1-&gt;3)-[alpha-D-Man-(1-&gt;2)-alpha-D-Man-(1-&gt;6)]-alpha-D-Man-(1-&gt;6)]-beta-D-Man-(1-&gt;4)-beta-D-GlcNAc-(1-&gt;4)-beta-D-GlcNAc)-L-asparaginyl-[protein] + beta-D-glucose. Its pathway is glycan metabolism; N-glycan metabolism. With respect to regulation, inhibited by glucose, maltose and nigerose, and by the antibiotic deoxynojirimycin. In terms of biological role, catalytic subunit of glucosidase 2, which cleaves sequentially the 2 innermost alpha-1,3-linked glucose residues from the Glc(2)Man(9)GlcNAc(2) oligosaccharide precursor of immature glycoproteins. The chain is Glucosidase 2 subunit alpha (ROT2) from Saccharomyces cerevisiae (strain ATCC 204508 / S288c) (Baker's yeast).